We begin with the raw amino-acid sequence, 167 residues long: Endoribonuclease YbeY (167 aa).

3 residues coordinate Zn(2+): H131, H135, and H141.

This sequence belongs to the endoribonuclease YbeY family. It depends on Zn(2+) as a cofactor.

The protein resides in the cytoplasm. In terms of biological role, single strand-specific metallo-endoribonuclease involved in late-stage 70S ribosome quality control and in maturation of the 3' terminus of the 16S rRNA. The chain is Endoribonuclease YbeY from Rickettsia felis (strain ATCC VR-1525 / URRWXCal2) (Rickettsia azadi).